The following is a 451-amino-acid chain: Phosphoglucosamine mutase (451 aa).

The active-site Phosphoserine intermediate is serine 102. Positions 102, 242, 244, and 246 each coordinate Mg(2+). Serine 102 carries the phosphoserine modification.

Belongs to the phosphohexose mutase family. Requires Mg(2+) as cofactor. Activated by phosphorylation.

It carries out the reaction alpha-D-glucosamine 1-phosphate = D-glucosamine 6-phosphate. Its function is as follows. Catalyzes the conversion of glucosamine-6-phosphate to glucosamine-1-phosphate. This Staphylococcus carnosus (strain TM300) protein is Phosphoglucosamine mutase.